Consider the following 26-residue polypeptide: Oxyopinin-3b (26 aa).

As to expression, expressed by the venom gland.

Its subcellular location is the secreted. Its function is as follows. May have cytolytic and antimicrobial activity. The protein is Oxyopinin-3b of Oxyopes takobius (Lynx spider).